Consider the following 115-residue polypeptide: Protein translation factor SUI1 homolog (115 aa).

It belongs to the SUI1 family.

Its function is as follows. Probably involved in translation. This Zea mays (Maize) protein is Protein translation factor SUI1 homolog (TIF).